We begin with the raw amino-acid sequence, 235 residues long: Phosphoribosylaminoimidazole-succinocarboxamide synthase (235 aa).

The protein belongs to the SAICAR synthetase family.

The catalysed reaction is 5-amino-1-(5-phospho-D-ribosyl)imidazole-4-carboxylate + L-aspartate + ATP = (2S)-2-[5-amino-1-(5-phospho-beta-D-ribosyl)imidazole-4-carboxamido]succinate + ADP + phosphate + 2 H(+). It participates in purine metabolism; IMP biosynthesis via de novo pathway; 5-amino-1-(5-phospho-D-ribosyl)imidazole-4-carboxamide from 5-amino-1-(5-phospho-D-ribosyl)imidazole-4-carboxylate: step 1/2. The sequence is that of Phosphoribosylaminoimidazole-succinocarboxamide synthase from Streptococcus pneumoniae (strain JJA).